The sequence spans 255 residues: Polycomb group RING finger protein 5 (255 aa).

The segment at 18-57 adopts an RING-type zinc-finger fold; sequence CYICKGYLIKPTTVTECLHTFCKTCIVQHFEDSNDCPRCG. The segment at 97–132 is disordered; that stretch reads WKKNKPQENGQDDMSKVDKPKVDEEGDENQDDKDYH. Basic and acidic residues predominate over residues 109–119; sequence DMSKVDKPKVD.

Component of a PRC1-like complex that contains PCGF5, RNF2 and UBE2D3. Interacts with RNF2; the interaction is direct. Interacts with CBX6, CBX7 and CBX8. Interacts with AUTS2; the interaction is direct. Identified in a complex that contains AUTS2, PCGF5, CSNK2B and RNF2.

The protein resides in the nucleus. The protein localises to the nucleoplasm. Component of a Polycomb group (PcG) multiprotein PRC1-like complex, a complex class required to maintain the transcriptionally repressive state of many genes, including Hox genes, throughout development. PcG PRC1 complex acts via chromatin remodeling and modification of histones; it mediates monoubiquitination of histone H2A 'Lys-119', rendering chromatin heritably changed in its expressibility. Within the PRC1-like complex, regulates RNF2 ubiquitin ligase activity. Plays a redundant role with PCGF3 as part of a PRC1-like complex that mediates monoubiquitination of histone H2A 'Lys-119' on the X chromosome and is required for normal silencing of one copy of the X chromosome in XX females. The protein is Polycomb group RING finger protein 5 (PCGF5) of Bos taurus (Bovine).